Consider the following 404-residue polypeptide: BRCA1-A complex subunit Abraxas 1 (404 aa).

An MPN domain is found at 7–161 (YIRVSGFVLG…YAVYRSHGSQ (155 aa)). The stretch at 219–268 (MNNSLQGELKMACKKVEESERLVEKLLADVSDLRRMVNERKQELREISAD) forms a coiled coil. The disordered stretch occupies residues 339–404 (GRLGRGGGTS…NLDVSNSPVF (66 aa)). The segment covering 391–404 (RNGNNLDVSNSPVF) has biased composition (polar residues). Phosphoserine is present on Ser401. A pSXXF motif motif is present at residues 401–404 (SPVF).

It belongs to the FAM175 family. Abraxas subfamily. As to quaternary structure, component of the BRCA1-A complex. Component of the BRISC complex. Homodimer. Interacts directly (when phosphorylated at Ser-401) with brca1. The phosphorylated homodimer can interact directly with two brca1 chains, giving rise to a heterotetramer. Post-translationally, phosphorylation of Ser-401 of the pSXXF motif by ATM or ATR constitutes a specific recognition motif for the BRCT domain of BRCA1.

The protein localises to the nucleus. Its function is as follows. Involved in DNA damage response and double-strand break (DSB) repair. Component of the BRCA1-A complex, acting as a central scaffold protein that assembles the various components of the complex and mediates the recruitment of brca1. The BRCA1-A complex specifically recognizes 'Lys-63'-linked ubiquitinated histones H2A and H2AX at DNA lesion sites, leading to target the brca1-bard1 heterodimer to sites of DNA damage at DSBs. This complex also possesses deubiquitinase activity that specifically removes 'Lys-63'-linked ubiquitin on histones H2A and H2AX. The polypeptide is BRCA1-A complex subunit Abraxas 1 (Salmo salar (Atlantic salmon)).